The chain runs to 407 residues: Inactive non-canonical poly(A) RNA polymerase protein Trf4-2 (407 aa).

Mg(2+) is bound by residues Asp85 and Asp87. The region spanning 221–280 (LALLLIQFLDYYGRKFDFFKYGISVLGQGGCVEKARLRSTLGENNWQSVLCIEDPVTPTN) is the PAP-associated domain. The segment at 354–390 (LVQPSPTGSTSPSASASASEDERSGGPATIGFGRCDD) is disordered. Residues 357–371 (PSPTGSTSPSASASA) show a composition bias toward low complexity.

The protein belongs to the DNA polymerase type-B-like family.

This chain is Inactive non-canonical poly(A) RNA polymerase protein Trf4-2, found in Drosophila melanogaster (Fruit fly).